Consider the following 519-residue polypeptide: 2-isopropylmalate synthase (519 aa).

Residues 5–267 (VIIFDTTLRD…QTRINHKEIY (263 aa)) enclose the Pyruvate carboxyltransferase domain. Asp14, His202, His204, and Asn238 together coordinate Mn(2+). Positions 392-519 (VMNYFNTQSG…RKHHTTQEAV (128 aa)) are regulatory domain.

It belongs to the alpha-IPM synthase/homocitrate synthase family. LeuA type 1 subfamily. As to quaternary structure, homodimer. It depends on Mn(2+) as a cofactor.

Its subcellular location is the cytoplasm. It carries out the reaction 3-methyl-2-oxobutanoate + acetyl-CoA + H2O = (2S)-2-isopropylmalate + CoA + H(+). The protein operates within amino-acid biosynthesis; L-leucine biosynthesis; L-leucine from 3-methyl-2-oxobutanoate: step 1/4. Functionally, catalyzes the condensation of the acetyl group of acetyl-CoA with 3-methyl-2-oxobutanoate (2-ketoisovalerate) to form 3-carboxy-3-hydroxy-4-methylpentanoate (2-isopropylmalate). This Proteus mirabilis (strain HI4320) protein is 2-isopropylmalate synthase.